The chain runs to 407 residues: Putative metabolite transport protein HI_1104 (407 aa).

Topologically, residues 1–16 are cytoplasmic; the sequence is MTNKVNSYGWKALIGS. The chain crosses the membrane as a helical span at residues 17–37; the sequence is AVGYGMDGFDLLILGFMLSAI. Over 38-48 the chain is Periplasmic; the sequence is SADLNLTPAQG. Residues 49 to 69 form a helical membrane-spanning segment; the sequence is GSLVTWTLIGAVFGGILFGAL. The Cytoplasmic segment spans residues 70–77; that stretch reads SDKYGRVR. The chain crosses the membrane as a helical span at residues 78–98; sequence VLTWTILLFAVFTGLCAIAQG. Residues 99-107 are Periplasmic-facing; sequence YWDLLIYRT. The chain crosses the membrane as a helical span at residues 108–128; it reads IAGIGLGGEFGIGMALAAEAW. Residues 129 to 138 are Cytoplasmic-facing; it reads PARHRAKAAS. A helical transmembrane segment spans residues 139–159; sequence YVALGWQVGVLGAALLTPLLL. Residue Pro160 is a topological domain, periplasmic. The chain crosses the membrane as a helical span at residues 161-181; it reads HIGWRGMFLVGIFPAFVAWFL. The Cytoplasmic segment spans residues 182 to 224; sequence RSHLHEPEIFTQKQTALSTQSSFTDKLRSFQLLIKDKATSKIS. Residues 225-245 form a helical membrane-spanning segment; sequence LGIVVLTSVQNFGYYGIMIWL. At 246 to 261 the chain is on the periplasmic side; that stretch reads PNFLSKQLGFSLTKSG. The chain crosses the membrane as a helical span at residues 262–282; that stretch reads LWTAVTVCGMMAGIWIFGQLA. The Cytoplasmic portion of the chain corresponds to 283–288; sequence DRIGRK. The chain crosses the membrane as a helical span at residues 289–309; sequence PSFLLFQLGAVISIVVYSQLT. Over 310–312 the chain is Periplasmic; sequence DPD. The helical transmembrane segment at 313–333 threads the bilayer; sequence IMLLAGAFLGMFVNGMLGGYG. Residues 334–357 lie on the Cytoplasmic side of the membrane; it reads ALMAEAYPTEARATAQNVLFNIGR. 2 helical membrane-spanning segments follow: residues 358–378 and 379–399; these read AVGG…SFQT and AIAL…FLIP. Residues 400–407 lie on the Cytoplasmic side of the membrane; sequence ELKGKALD.

The protein belongs to the major facilitator superfamily. Aromatic acid:H(+) symporter (AAHS) (TC 2.A.1.15) family.

The protein resides in the cell inner membrane. The protein is Putative metabolite transport protein HI_1104 of Haemophilus influenzae (strain ATCC 51907 / DSM 11121 / KW20 / Rd).